Reading from the N-terminus, the 203-residue chain is Thymidylate kinase (203 aa).

Residue 14–21 (GGEGSGKS) participates in ATP binding.

The protein belongs to the thymidylate kinase family.

The catalysed reaction is dTMP + ATP = dTDP + ADP. Its function is as follows. Phosphorylation of dTMP to form dTDP in both de novo and salvage pathways of dTTP synthesis. The protein is Thymidylate kinase of Rickettsia canadensis (strain McKiel).